The following is a 938-amino-acid chain: Isoleucine--tRNA ligase (938 aa).

Residues 58–68 (PYANGSIHIGH) carry the 'HIGH' region motif. Glutamate 561 is a binding site for L-isoleucyl-5'-AMP. Residues 602–606 (KMSKS) carry the 'KMSKS' region motif. Lysine 605 contacts ATP. Zn(2+)-binding residues include cysteine 901, cysteine 904, cysteine 921, and cysteine 924.

It belongs to the class-I aminoacyl-tRNA synthetase family. IleS type 1 subfamily. Monomer. The cofactor is Zn(2+).

The protein localises to the cytoplasm. The enzyme catalyses tRNA(Ile) + L-isoleucine + ATP = L-isoleucyl-tRNA(Ile) + AMP + diphosphate. Its function is as follows. Catalyzes the attachment of isoleucine to tRNA(Ile). As IleRS can inadvertently accommodate and process structurally similar amino acids such as valine, to avoid such errors it has two additional distinct tRNA(Ile)-dependent editing activities. One activity is designated as 'pretransfer' editing and involves the hydrolysis of activated Val-AMP. The other activity is designated 'posttransfer' editing and involves deacylation of mischarged Val-tRNA(Ile). In Erwinia tasmaniensis (strain DSM 17950 / CFBP 7177 / CIP 109463 / NCPPB 4357 / Et1/99), this protein is Isoleucine--tRNA ligase.